Here is a 684-residue protein sequence, read N- to C-terminus: Protein SEEDLING PLASTID DEVELOPMENT 1 (684 aa).

The transit peptide at 1-78 (MRALNSRLVL…FSFDVRSPSS (78 aa)) directs the protein to the chloroplast. Residues 33-91 (SDSSSSFRRTRGARQRIASSKSPASSPSPVRRPSDGFSFDVRSPSSDSSISSRKSPTTA) form a disordered region. Low complexity predominate over residues 50-88 (ASSKSPASSPSPVRRPSDGFSFDVRSPSSDSSISSRKSP). 220–227 (GSPGVGKT) contributes to the ATP binding site. Residues 651-684 (PRRSTKKTLTSSSPQKSADGSMGTTGTRLPFLKD) are disordered. Over residues 657 to 667 (KTLTSSSPQKS) the composition is skewed to low complexity.

Belongs to the ycf45 family.

It is found in the plastid. The protein resides in the chloroplast membrane. It localises to the chloroplast envelope. In terms of biological role, required during eoplast (a highly reduced plastid type present during the degreening and dehydration stages of seed maturation) development in embryos and early stages of eoplast redifferentiation during seedling growth. The protein is Protein SEEDLING PLASTID DEVELOPMENT 1 of Arabidopsis thaliana (Mouse-ear cress).